A 330-amino-acid chain; its full sequence is Ketol-acid reductoisomerase (NADP(+)) (330 aa).

The KARI N-terminal Rossmann domain maps to 2-181; the sequence is MEKYHETDAD…GATRAVVLET (180 aa). Residues 25–28, Arg-48, Ser-52, and 82–85 contribute to the NADP(+) site; these read YGSQ and DENQ. The active site involves His-107. Gly-133 is an NADP(+) binding site. One can recognise a KARI C-terminal knotted domain in the interval 182-327; sequence TFREETETDL…SELRAMMPQF (146 aa). The Mg(2+) site is built by Asp-190, Glu-194, Glu-226, and Glu-230. Ser-251 serves as a coordination point for substrate.

Belongs to the ketol-acid reductoisomerase family. Mg(2+) is required as a cofactor.

The enzyme catalyses (2R)-2,3-dihydroxy-3-methylbutanoate + NADP(+) = (2S)-2-acetolactate + NADPH + H(+). It carries out the reaction (2R,3R)-2,3-dihydroxy-3-methylpentanoate + NADP(+) = (S)-2-ethyl-2-hydroxy-3-oxobutanoate + NADPH + H(+). The protein operates within amino-acid biosynthesis; L-isoleucine biosynthesis; L-isoleucine from 2-oxobutanoate: step 2/4. It participates in amino-acid biosynthesis; L-valine biosynthesis; L-valine from pyruvate: step 2/4. Its function is as follows. Involved in the biosynthesis of branched-chain amino acids (BCAA). Catalyzes an alkyl-migration followed by a ketol-acid reduction of (S)-2-acetolactate (S2AL) to yield (R)-2,3-dihydroxy-isovalerate. In the isomerase reaction, S2AL is rearranged via a Mg-dependent methyl migration to produce 3-hydroxy-3-methyl-2-ketobutyrate (HMKB). In the reductase reaction, this 2-ketoacid undergoes a metal-dependent reduction by NADPH to yield (R)-2,3-dihydroxy-isovalerate. This Methanocorpusculum labreanum (strain ATCC 43576 / DSM 4855 / Z) protein is Ketol-acid reductoisomerase (NADP(+)).